The primary structure comprises 77 residues: Acyl carrier protein (77 aa).

The 76-residue stretch at 2–77 (STIEERVKKV…EAIDYVVAHQ (76 aa)) folds into the Carrier domain. Ser37 carries the post-translational modification O-(pantetheine 4'-phosphoryl)serine.

It belongs to the acyl carrier protein (ACP) family. Post-translationally, 4'-phosphopantetheine is transferred from CoA to a specific serine of apo-ACP by AcpS. This modification is essential for activity because fatty acids are bound in thioester linkage to the sulfhydryl of the prosthetic group.

The protein localises to the cytoplasm. It participates in lipid metabolism; fatty acid biosynthesis. Functionally, carrier of the growing fatty acid chain in fatty acid biosynthesis. The chain is Acyl carrier protein from Chromohalobacter salexigens (strain ATCC BAA-138 / DSM 3043 / CIP 106854 / NCIMB 13768 / 1H11).